The sequence spans 239 residues: Peptidyl-tRNA hydrolase (239 aa).

A tRNA-binding site is contributed by tyrosine 14. The active-site Proton acceptor is histidine 19. Residues phenylalanine 64, asparagine 66, and asparagine 112 each contribute to the tRNA site. The interval 188-225 (GGKPDAEEPQAPKKQVGQSHIHKARNAAQPKKLPATGP) is disordered.

Belongs to the PTH family. Monomer.

Its subcellular location is the cytoplasm. It catalyses the reaction an N-acyl-L-alpha-aminoacyl-tRNA + H2O = an N-acyl-L-amino acid + a tRNA + H(+). Its function is as follows. Hydrolyzes ribosome-free peptidyl-tRNAs (with 1 or more amino acids incorporated), which drop off the ribosome during protein synthesis, or as a result of ribosome stalling. Catalyzes the release of premature peptidyl moieties from peptidyl-tRNA molecules trapped in stalled 50S ribosomal subunits, and thus maintains levels of free tRNAs and 50S ribosomes. The protein is Peptidyl-tRNA hydrolase of Sinorhizobium fredii (strain NBRC 101917 / NGR234).